The chain runs to 519 residues: Baeyer-Villiger monooxygenase (519 aa).

Residues glutamate 41, 49-52 (TWRD), aspartate 61, tyrosine 67, and valine 110 each bind FAD. Position 59 to 61 (59 to 61 (ACD)) interacts with NADP(+). NADP(+) contacts are provided by residues 183–189 (TGASAIQ), 206–207 (RT), and 292–293 (KR). Residue methionine 399 coordinates FAD. A disordered region spans residues 499–519 (GAKAAEADTGADTGADAEVSA).

The protein belongs to the FAD-binding monooxygenase family. Requires FAD as cofactor.

Functionally, catalyzes a Baeyer-Villiger oxidation reaction, i.e. the insertion of an oxygen atom into a carbon-carbon bond adjacent to a carbonyl, which converts ketones to esters or lactones using NADPH and/or NADH as an electron donor. Thus, can convert bicyclo[3.2.0]hept-2-en-6-one into the oxidative lactone products 2-oxabicyclo[3.3.0]oct-6-en-3-one and 3-oxabicyclo[3.3.0]oct-6-en-2-one. Is also able to catalyze the sulfoxidation of methyl phenyl sulfide (thioanisole). This chain is Baeyer-Villiger monooxygenase, found in Streptomyces coelicolor (strain ATCC BAA-471 / A3(2) / M145).